The following is a 172-amino-acid chain: 3-hydroxydecanoyl-[acyl-carrier-protein] dehydratase (172 aa).

His71 is an active-site residue.

Belongs to the thioester dehydratase family. FabA subfamily. As to quaternary structure, homodimer.

The protein resides in the cytoplasm. The enzyme catalyses a (3R)-hydroxyacyl-[ACP] = a (2E)-enoyl-[ACP] + H2O. The catalysed reaction is (3R)-hydroxydecanoyl-[ACP] = (2E)-decenoyl-[ACP] + H2O. It carries out the reaction (2E)-decenoyl-[ACP] = (3Z)-decenoyl-[ACP]. Its pathway is lipid metabolism; fatty acid biosynthesis. Necessary for the introduction of cis unsaturation into fatty acids. Catalyzes the dehydration of (3R)-3-hydroxydecanoyl-ACP to E-(2)-decenoyl-ACP and then its isomerization to Z-(3)-decenoyl-ACP. Can catalyze the dehydratase reaction for beta-hydroxyacyl-ACPs with saturated chain lengths up to 16:0, being most active on intermediate chain length. The protein is 3-hydroxydecanoyl-[acyl-carrier-protein] dehydratase of Aliivibrio fischeri (strain ATCC 700601 / ES114) (Vibrio fischeri).